A 249-amino-acid chain; its full sequence is Putative [LysW]-aminoadipate/[LysW]-glutamate kinase (249 aa).

The substrate site is built by R63 and N166.

This sequence belongs to the acetylglutamate kinase family. LysZ subfamily.

Its subcellular location is the cytoplasm. It catalyses the reaction [amino-group carrier protein]-C-terminal-N-(1,4-dicarboxybutan-1-yl)-L-glutamine + ATP = [amino-group carrier protein]-C-terminal-N-(1-carboxy-5-phosphooxy-5-oxopentan-1-yl)-L-glutamine + ADP. The enzyme catalyses [amino-group carrier protein]-C-terminal-gamma-(L-glutamyl)-L-glutamate + ATP = [amino-group carrier protein]-C-terminal-gamma-(5-phospho-L-glutamyl)-L-glutamate + ADP. The protein operates within amino-acid biosynthesis; L-lysine biosynthesis via AAA pathway; L-lysine from L-alpha-aminoadipate (Thermus route): step 2/5. Its pathway is amino-acid biosynthesis; L-arginine biosynthesis. Involved in both the arginine and lysine biosynthetic pathways. Phosphorylates the LysW-bound precursors glutamate (for arginine biosynthesis), respectively alpha-aminoadipate (for lysine biosynthesis). This is Putative [LysW]-aminoadipate/[LysW]-glutamate kinase from Pyrococcus furiosus (strain ATCC 43587 / DSM 3638 / JCM 8422 / Vc1).